The sequence spans 70 residues: Conotoxin ba3a (70 aa).

Positions 1–20 are cleaved as a signal peptide; that stretch reads MLKIGVMLSIILVLFPLATL. A propeptide spanning residues 21–55 is cleaved from the precursor; the sequence is QLVAERPAAERYAENKQDLNPDERRNYLVDLGVER.

In terms of tissue distribution, expressed by the venom duct.

The protein localises to the secreted. This Conus bayani (Bayan's cone) protein is Conotoxin ba3a.